Reading from the N-terminus, the 358-residue chain is cAMP-dependent protein kinase catalytic subunit PRKX (358 aa).

An N-acetylmethionine modification is found at methionine 1. Residues 1 to 34 (MEAPGLAQAAAAESDSRKVAEETPDGAPALCPSP) form a disordered region. The Protein kinase domain occupies 49 to 303 (FDTLATVGTG…ANDVKHHRWF (255 aa)). ATP is bound by residues 55–63 (VGTGTFGRV) and lysine 78. Aspartate 172 (proton acceptor) is an active-site residue. Threonine 203 carries the post-translational modification Phosphothreonine. The 55-residue stretch at 304–358 (RSVDWEAVPQRKLKPPIVPKIAGDGDTSNFETYPENDWDTAAPVPQKDLEIFKNF) folds into the AGC-kinase C-terminal domain.

Belongs to the protein kinase superfamily. AGC Ser/Thr protein kinase family. cAMP subfamily. In terms of assembly, like other cAMP-dependent protein kinases, the inactive holoenzyme is probably composed of 2 PRKX catalytic subunits and a dimer of regulatory subunits. Interacts (cAMP-dependent) specifically with the regulatory subunits PRKAR1A and PRKAR1B. Compared to other cAMP-dependent serine/threonine protein kinases, does not interact with the 2 other PKA regulatory subunits PRKAR2A and PRKAR2B. Interacts with cAMP-dependent protein kinase inhibitor/PKI proteins; inhibits PRKX. Interacts with GPKOW. Interacts with SMAD6. Interacts with PKD1; involved in differentiation and controlled morphogenesis of the kidney. Interacts with PIN1 (via WW domain). In terms of processing, phosphorylated; autophosphorylates in vitro. As to expression, widely expressed (at protein level). Specifically expressed in blood by macrophages and granulocytes according to PubMed:9860982.

The protein localises to the cytoplasm. The protein resides in the nucleus. The enzyme catalyses L-seryl-[protein] + ATP = O-phospho-L-seryl-[protein] + ADP + H(+). It catalyses the reaction L-threonyl-[protein] + ATP = O-phospho-L-threonyl-[protein] + ADP + H(+). With respect to regulation, binding of cAMP to the PRKAR1A or PRKAR1B regulatory subunits induces dissociation of the holoenzyme heterotetramer. The released monomeric PRKX is then active and able to phosphorylate its substrates. In terms of biological role, serine/threonine protein kinase regulated by and mediating cAMP signaling in cells. Acts through phosphorylation of downstream targets that may include CREB, SMAD6 and PKD1 and has multiple functions in cellular differentiation and epithelial morphogenesis. Regulates myeloid cell differentiation through SMAD6 phosphorylation. Involved in nephrogenesis by stimulating renal epithelial cell migration and tubulogenesis. Also involved in angiogenesis through stimulation of endothelial cell proliferation, migration and vascular-like structure formation. This Homo sapiens (Human) protein is cAMP-dependent protein kinase catalytic subunit PRKX (PRKX).